Reading from the N-terminus, the 156-residue chain is Transcription antitermination protein NusB (156 aa).

The protein belongs to the NusB family.

Functionally, involved in transcription antitermination. Required for transcription of ribosomal RNA (rRNA) genes. Binds specifically to the boxA antiterminator sequence of the ribosomal RNA (rrn) operons. In Rickettsia bellii (strain OSU 85-389), this protein is Transcription antitermination protein NusB.